The sequence spans 508 residues: ATP synthase subunit alpha (508 aa).

169 to 176 (GDRQTGKT) provides a ligand contact to ATP.

The protein belongs to the ATPase alpha/beta chains family. In terms of assembly, F-type ATPases have 2 components, CF(1) - the catalytic core - and CF(0) - the membrane proton channel. CF(1) has five subunits: alpha(3), beta(3), gamma(1), delta(1), epsilon(1). CF(0) has three main subunits: a(1), b(2) and c(9-12). The alpha and beta chains form an alternating ring which encloses part of the gamma chain. CF(1) is attached to CF(0) by a central stalk formed by the gamma and epsilon chains, while a peripheral stalk is formed by the delta and b chains.

It localises to the cell inner membrane. The enzyme catalyses ATP + H2O + 4 H(+)(in) = ADP + phosphate + 5 H(+)(out). Its function is as follows. Produces ATP from ADP in the presence of a proton gradient across the membrane. The alpha chain is a regulatory subunit. The chain is ATP synthase subunit alpha from Allorhizobium ampelinum (strain ATCC BAA-846 / DSM 112012 / S4) (Agrobacterium vitis (strain S4)).